Here is a 117-residue protein sequence, read N- to C-terminus: Bomanin Bicipital 1 (117 aa).

The N-terminal stretch at 1–20 is a signal peptide; that stretch reads MKCLILSFAIFVVLASQATA. 2 disulfide bridges follow: Cys29-Cys32 and Cys107-Cys110.

This sequence belongs to the bomanin family. As to expression, hemolymph (at protein level).

The protein resides in the secreted. Functionally, secreted immune-induced peptide induced by Toll signaling. Has a role in resistance to bacterial and fungal infections. The chain is Bomanin Bicipital 1 from Drosophila melanogaster (Fruit fly).